The chain runs to 404 residues: MTEVTELSRPEGEALNTREVLLNLGPQHPSTHGVLRLVLELDGEFVERVDPHIGYLHRGTEKLAESFTYTQIFPLTDRLDYLCPPSNNLAFALAVEKLLGIEAPIRAQYIRVMMAELARISGHLLITGALPMDLGAMTALLYVMREREMIMDLLEMITGARMHTSFCRVGGVREDLPDGFFPKIREFCDIFPNRIRDYERLLEDNRVFLNRTKGIGVISAEDAVDLGLSGPNLRASGVDWDIRRDEPYEIYDRLDFNVITRDEGDCYARWRCRVDEMRESIGIIKQCIDQMPEGPFQIDMPTIAFPLDKDRVHCSMEALIQHFDLSAYGFKVPKGEVYSAIEAPKGELGFYIISDGSPKPFRMKVRAPSFVNLQALFGVTNARYLADMIAVLGSLDPVMAEVDK.

Belongs to the complex I 49 kDa subunit family. In terms of assembly, NDH-1 is composed of 14 different subunits. Subunits NuoB, C, D, E, F, and G constitute the peripheral sector of the complex.

It is found in the cell inner membrane. The enzyme catalyses a quinone + NADH + 5 H(+)(in) = a quinol + NAD(+) + 4 H(+)(out). Functionally, NDH-1 shuttles electrons from NADH, via FMN and iron-sulfur (Fe-S) centers, to quinones in the respiratory chain. The immediate electron acceptor for the enzyme in this species is believed to be ubiquinone. Couples the redox reaction to proton translocation (for every two electrons transferred, four hydrogen ions are translocated across the cytoplasmic membrane), and thus conserves the redox energy in a proton gradient. This chain is NADH-quinone oxidoreductase subunit D 2, found in Rhizobium etli (strain CIAT 652).